The primary structure comprises 864 residues: Mitochondrial 15S rRNA processing factor CCM1 (864 aa).

The transit peptide at 1 to 76 (MYMARCGPKN…REFSNTLKER (76 aa)) directs the protein to the mitochondrion. PPR repeat units follow at residues 319 to 353 (NKQN…STKH) and 356 to 390 (DICT…NIKP).

It belongs to the CCM1 family. In terms of assembly, binds to mitochondrial small subunit 15S rRNA.

Its subcellular location is the mitochondrion. Regulates mitochondrial small subunit maturation by controlling 15S rRNA 5'-end processing. Localizes to the 5' precursor of the 15S rRNA in a position that is subsequently occupied by mS47 in the mature yeast mtSSU. Uses structure and sequence-specific RNA recognition, binding to a single-stranded region of the precursor and specifically recognizing bases -6 to -1. The exchange of Ccm1 for mS47 is coupled to the irreversible removal of precursor rRNA that is accompanied by conformational changes of the mitoribosomal proteins uS5m and mS26. These conformational changes signal completion of 5'-end rRNA processing through protection of the mature 5'-end of the 15S rRNA and stabilization of mS47. The removal of the 5' precursor together with the dissociation of Ccm1 may be catalyzed by the 5'-3' exoribonuclease Pet127. Involved in the specific removal of group I introns in mitochondrial encoded transcripts. This Saccharomyces cerevisiae (strain RM11-1a) (Baker's yeast) protein is Mitochondrial 15S rRNA processing factor CCM1 (CCM1).